A 426-amino-acid polypeptide reads, in one-letter code: Enolase (426 aa).

Gln-163 is a (2R)-2-phosphoglycerate binding site. Glu-205 serves as the catalytic Proton donor. Mg(2+) is bound by residues Asp-242, Glu-283, and Asp-310. 4 residues coordinate (2R)-2-phosphoglycerate: Lys-335, Arg-364, Ser-365, and Lys-386. Lys-335 functions as the Proton acceptor in the catalytic mechanism.

This sequence belongs to the enolase family. It depends on Mg(2+) as a cofactor.

It is found in the cytoplasm. The protein localises to the secreted. Its subcellular location is the cell surface. It carries out the reaction (2R)-2-phosphoglycerate = phosphoenolpyruvate + H2O. It participates in carbohydrate degradation; glycolysis; pyruvate from D-glyceraldehyde 3-phosphate: step 4/5. In terms of biological role, catalyzes the reversible conversion of 2-phosphoglycerate (2-PG) into phosphoenolpyruvate (PEP). It is essential for the degradation of carbohydrates via glycolysis. The chain is Enolase from Clavibacter michiganensis subsp. michiganensis (strain NCPPB 382).